Consider the following 590-residue polypeptide: uncharacterized protein (590 aa).

Disordered stretches follow at residues 306–329 (IAEPQTHTGGADRQRPQRPDGIPY) and 528–590 (QPAP…LMNL). Pro residues predominate over residues 543 to 563 (PSLPQPVPEPLAPQEPPPPGT).

This is an uncharacterized protein from Ictaluridae (bullhead catfishes).